The following is a 393-amino-acid chain: 4-hydroxyphenylpyruvate dioxygenase (393 aa).

The residue at position 2 (T2) is an N-acetylthreonine. VOC domains lie at 18-152 (HFHS…KMTF) and 180-338 (IIDH…IFTK). H183 is a Fe cation binding site. A phosphoserine mark is found at S211, S226, and S250. Residues H266 and E349 each coordinate Fe cation.

Belongs to the 4HPPD family. As to quaternary structure, homodimer. Fe cation is required as a cofactor. As to expression, liver.

It localises to the cytoplasm. The protein localises to the endoplasmic reticulum membrane. The protein resides in the golgi apparatus membrane. It carries out the reaction 3-(4-hydroxyphenyl)pyruvate + O2 = homogentisate + CO2. It functions in the pathway amino-acid degradation; L-phenylalanine degradation; acetoacetate and fumarate from L-phenylalanine: step 3/6. In terms of biological role, catalyzes the conversion of 4-hydroxyphenylpyruvic acid to homogentisic acid, one of the steps in tyrosine catabolism. The sequence is that of 4-hydroxyphenylpyruvate dioxygenase (HPD) from Sus scrofa (Pig).